The chain runs to 1116 residues: Angiopoietin-1 receptor (1116 aa).

A signal peptide spans 1–21 (MCLLDSCTALLLLGCWMSGSA). Residues 22–745 (VRISDVTLVN…FAAHGHLLLY (724 aa)) are Extracellular-facing. The cysteines at positions 46 and 106 are disulfide-linked. Positions 46–126 (CVSSDWSSGG…YTYKMLQEAA (81 aa)) constitute an Ig-like C2-type 1 domain. N-linked (GlcNAc...) asparagine glycans are attached at residues Asn110, Asn143, and Asn223. EGF-like domains lie at 214–256 (SCRA…HTCD), 258–302 (VCGE…LSCN), and 304–342 (ACPDGYYGAGCTQKCVCAKGRCDRFRGCVCAGRHGSRCE). Intrachain disulfides connect Cys215-Cys224, Cys228-Cys237, Cys231-Cys244, Cys246-Cys255, Cys259-Cys268, Cys272-Cys277, Cys283-Cys290, Cys292-Cys301, Cys305-Cys314, Cys318-Cys325, Cys320-Cys331, and Cys333-Cys341. The region spanning 348–438 (PVISHLRDVE…MQVEDEFTVE (91 aa)) is the Ig-like C2-type 2 domain. 3 N-linked (GlcNAc...) asparagine glycosylation sites follow: Asn367, Asn387, and Asn425. A disulfide bridge connects residues Cys368 and Cys422. Fibronectin type-III domains follow at residues 444-538 (RPQN…TQVL), 540-633 (LPVG…QLPP), and 634-729 (PPAN…TLPQ). 3 N-linked (GlcNAc...) asparagine glycosylation sites follow: Asn590, Asn637, and Asn642. The helical transmembrane segment at 746–766 (AILGSAGMTCCTVLLAFCIVL) threads the bilayer. Residues 767 to 1116 (QLKRNTLQRR…GIDCSAEEAG (350 aa)) are Cytoplasmic-facing. The Protein kinase domain maps to 816–1095 (IQFQDVLGEG…RMLEERKTYV (280 aa)). Residues 822 to 830 (LGEGNFGQV) and Lys847 each bind ATP. Position 852 is a phosphotyrosine; by autocatalysis (Tyr852). Asp956 functions as the Proton acceptor in the catalytic mechanism. Residues Tyr984, Tyr1094, and Tyr1100 each carry the phosphotyrosine; by autocatalysis modification.

The protein belongs to the protein kinase superfamily. Tyr protein kinase family. Tie subfamily. Interacts with svep1. In terms of processing, autophosphorylated on tyrosine residues in response to ligand binding. Autophosphorylation occurs in trans, i.e. one subunit of the dimeric receptor phosphorylates tyrosine residues on the other subunit. Autophosphorylation occurs in a sequential manner, where Tyr-984 in the kinase activation loop is phosphorylated first, followed by autophosphorylation at additional tyrosine residues. Phosphorylation is important for interaction with scaffold proteins and effectors.

It localises to the cell membrane. It is found in the cell junction. The protein resides in the focal adhesion. The protein localises to the cytoplasm. Its subcellular location is the cytoskeleton. It catalyses the reaction L-tyrosyl-[protein] + ATP = O-phospho-L-tyrosyl-[protein] + ADP + H(+). With respect to regulation, angiopoietin binding leads to receptor dimerization and activation by autophosphorylation at Tyr-984 on the kinase activation loop. Tyrosine-protein kinase that acts as a cell-surface receptor for angiopoietins and regulates angiogenesis, endothelial cell survival, proliferation, migration, adhesion and cell spreading, reorganization of the actin cytoskeleton, but also maintenance of vascular quiescence. Can activate or inhibit angiogenesis, depending on the context. Angiopoietin signaling triggers receptor dimerization and autophosphorylation at specific tyrosine residues that then serve as binding sites for scaffold proteins and effectors. The polypeptide is Angiopoietin-1 receptor (Danio rerio (Zebrafish)).